The sequence spans 327 residues: MAMTAEVKDELSRLVVTQVSSRRAEVASLLRFAGGLHIVSGRVVVEAEVDQGSIARRLRKDIFDLYGYNAVVHVLSAGGIRKTTRYVVRVAKDGEALARQTGLLDLRGRPVRGLPAQVVGGSVADAEAAWRGAFLAHGSLTEPGRSSALEVSCPGPEAALALVGAARRLGVSAKAREVRGSDRVVVRDGEAIGALLTRMGAQDTRLTWEERRMRREVRATANRLANFDDANLRRSARAAVAAAARVERALEILGDTVPDHLAAAGKLRVEHRQASLEELGRLADPVMTKDAVAGRIRRLLSMADRKAKTEGIPDTESAVTPELLEEA.

The H-T-H motif DNA-binding region spans 275–308 (SLEELGRLADPVMTKDAVAGRIRRLLSMADRKAK). Positions 307-327 (AKTEGIPDTESAVTPELLEEA) are disordered.

It belongs to the WhiA family.

Functionally, involved in cell division and chromosome segregation. This Mycobacteroides abscessus (strain ATCC 19977 / DSM 44196 / CCUG 20993 / CIP 104536 / JCM 13569 / NCTC 13031 / TMC 1543 / L948) (Mycobacterium abscessus) protein is Probable cell division protein WhiA.